An 84-amino-acid chain; its full sequence is Probable cyclin-dependent kinases regulatory subunit (84 aa).

The protein belongs to the CKS family. Monomer in solution; may form a homohexamer that can probably bind six kinase subunits.

Its function is as follows. Binds to the catalytic subunit of the cyclin dependent kinases and is essential for their biological function. This chain is Probable cyclin-dependent kinases regulatory subunit, found in Physarum polycephalum (Slime mold).